A 474-amino-acid polypeptide reads, in one-letter code: Bifunctional protein HldE (474 aa).

The interval M1–E318 is ribokinase. N194 to E197 contributes to the ATP binding site. Residue D263 is part of the active site. Residues F343–G474 form a cytidylyltransferase region.

This sequence in the N-terminal section; belongs to the carbohydrate kinase PfkB family. In the C-terminal section; belongs to the cytidylyltransferase family. In terms of assembly, homodimer.

It carries out the reaction D-glycero-beta-D-manno-heptose 7-phosphate + ATP = D-glycero-beta-D-manno-heptose 1,7-bisphosphate + ADP + H(+). The catalysed reaction is D-glycero-beta-D-manno-heptose 1-phosphate + ATP + H(+) = ADP-D-glycero-beta-D-manno-heptose + diphosphate. The protein operates within nucleotide-sugar biosynthesis; ADP-L-glycero-beta-D-manno-heptose biosynthesis; ADP-L-glycero-beta-D-manno-heptose from D-glycero-beta-D-manno-heptose 7-phosphate: step 1/4. Its pathway is nucleotide-sugar biosynthesis; ADP-L-glycero-beta-D-manno-heptose biosynthesis; ADP-L-glycero-beta-D-manno-heptose from D-glycero-beta-D-manno-heptose 7-phosphate: step 3/4. Catalyzes the phosphorylation of D-glycero-D-manno-heptose 7-phosphate at the C-1 position to selectively form D-glycero-beta-D-manno-heptose-1,7-bisphosphate. Its function is as follows. Catalyzes the ADP transfer from ATP to D-glycero-beta-D-manno-heptose 1-phosphate, yielding ADP-D-glycero-beta-D-manno-heptose. The sequence is that of Bifunctional protein HldE from Pseudomonas aeruginosa (strain UCBPP-PA14).